Consider the following 44-residue polypeptide: Cytochrome b559 subunit beta (44 aa).

A helical membrane pass occupies residues 19–35; it reads WLAIHGIAIPTVFFLGA. Heme is bound at residue His23.

This sequence belongs to the PsbE/PsbF family. As to quaternary structure, heterodimer of an alpha subunit and a beta subunit. PSII is composed of 1 copy each of membrane proteins PsbA, PsbB, PsbC, PsbD, PsbE, PsbF, PsbH, PsbI, PsbJ, PsbK, PsbL, PsbM, PsbT, PsbX, PsbY, PsbZ, Psb30/Ycf12, at least 3 peripheral proteins of the oxygen-evolving complex and a large number of cofactors. It forms dimeric complexes. Heme b is required as a cofactor.

It localises to the plastid. Its subcellular location is the chloroplast thylakoid membrane. Functionally, this b-type cytochrome is tightly associated with the reaction center of photosystem II (PSII). PSII is a light-driven water:plastoquinone oxidoreductase that uses light energy to abstract electrons from H(2)O, generating O(2) and a proton gradient subsequently used for ATP formation. It consists of a core antenna complex that captures photons, and an electron transfer chain that converts photonic excitation into a charge separation. In Gracilaria tenuistipitata var. liui (Red alga), this protein is Cytochrome b559 subunit beta.